Consider the following 81-residue polypeptide: MAVKIRLRRMGCKKAPFYRIVVADSRSPRDGRFIEEIGYYNPITEPAEVKINEEKASKWLQDGAQPTDVVKKLFTQAGLSK.

It belongs to the bacterial ribosomal protein bS16 family.

This is Small ribosomal subunit protein bS16 from Clostridium botulinum (strain Eklund 17B / Type B).